Consider the following 64-residue polypeptide: MAVQKSRVTPSRRGQRRSHDALSAKQLSTDPTTGEVHLRHHITADGFYRGKKVIQTKTSAVEED.

Residues 1-36 (MAVQKSRVTPSRRGQRRSHDALSAKQLSTDPTTGEV) form a disordered region.

It belongs to the bacterial ribosomal protein bL32 family.

This chain is Large ribosomal subunit protein bL32, found in Stenotrophomonas maltophilia (strain K279a).